Here is a 524-residue protein sequence, read N- to C-terminus: Glucose-6-phosphate isomerase (524 aa).

The Proton donor role is filled by Glu346. Residues His377 and Lys492 contribute to the active site.

The protein belongs to the GPI family.

Its subcellular location is the cytoplasm. It catalyses the reaction alpha-D-glucose 6-phosphate = beta-D-fructose 6-phosphate. Its pathway is carbohydrate biosynthesis; gluconeogenesis. It participates in carbohydrate degradation; glycolysis; D-glyceraldehyde 3-phosphate and glycerone phosphate from D-glucose: step 2/4. Catalyzes the reversible isomerization of glucose-6-phosphate to fructose-6-phosphate. This Chlamydia trachomatis serovar A (strain ATCC VR-571B / DSM 19440 / HAR-13) protein is Glucose-6-phosphate isomerase.